Here is a 125-residue protein sequence, read N- to C-terminus: Small ribosomal subunit protein uS13 (125 aa).

The segment at 93-125 (RKGLPVRGQRTKTNARTRKGPKRTVAGKKKAGR) is disordered.

Belongs to the universal ribosomal protein uS13 family. In terms of assembly, part of the 30S ribosomal subunit. Forms a loose heterodimer with protein S19. Forms two bridges to the 50S subunit in the 70S ribosome.

In terms of biological role, located at the top of the head of the 30S subunit, it contacts several helices of the 16S rRNA. In the 70S ribosome it contacts the 23S rRNA (bridge B1a) and protein L5 of the 50S subunit (bridge B1b), connecting the 2 subunits; these bridges are implicated in subunit movement. Contacts the tRNAs in the A and P-sites. The sequence is that of Small ribosomal subunit protein uS13 from Paenarthrobacter aurescens (strain TC1).